Here is a 152-residue protein sequence, read N- to C-terminus: VQ motif-containing protein 8, chloroplastic (152 aa).

Residues 1-42 form a disordered region; that stretch reads MIPTRCNEINGSRPSSLKLAGESHTIKKTSSCKSKPRPHGRA. The N-terminal 58 residues, 1-58, are a transit peptide targeting the chloroplast; sequence MIPTRCNEINGSRPSSLKLAGESHTIKKTSSCKSKPRPHGRASPVIIYAHSPKVIHTR. The short motif at 62–71 is the VQ element; that stretch reads FMALVQRLTG. A disordered region spans residues 80 to 108; it reads TSESSSSVVTEEVNVGDDNTAAPFSQDRT. The segment covering 81–92 has biased composition (low complexity); that stretch reads SESSSSVVTEEV.

It is found in the plastid. The protein resides in the chloroplast. In terms of biological role, may be involved in chloroplast development. The protein is VQ motif-containing protein 8, chloroplastic of Arabidopsis thaliana (Mouse-ear cress).